The sequence spans 256 residues: UPF0246 protein PG_1544 (256 aa).

Belongs to the UPF0246 family.

This chain is UPF0246 protein PG_1544, found in Porphyromonas gingivalis (strain ATCC BAA-308 / W83).